The following is a 574-amino-acid chain: Aspartate--tRNA ligase (574 aa).

Glu-172 is an L-aspartate binding site. Residues 196–199 (QIFK) form an aspartate region. Arg-218 lines the L-aspartate pocket. ATP is bound by residues 218 to 220 (RDE) and Gln-227. His-453 contacts L-aspartate. Residue Glu-487 participates in ATP binding. Arg-494 contacts L-aspartate. Position 539–542 (539–542 (GLDR)) interacts with ATP.

Belongs to the class-II aminoacyl-tRNA synthetase family. Type 1 subfamily. As to quaternary structure, homodimer.

The protein localises to the cytoplasm. The catalysed reaction is tRNA(Asp) + L-aspartate + ATP = L-aspartyl-tRNA(Asp) + AMP + diphosphate. In terms of biological role, catalyzes the attachment of L-aspartate to tRNA(Asp) in a two-step reaction: L-aspartate is first activated by ATP to form Asp-AMP and then transferred to the acceptor end of tRNA(Asp). This is Aspartate--tRNA ligase from Blochmanniella pennsylvanica (strain BPEN).